Here is a 393-residue protein sequence, read N- to C-terminus: tRNA(Met) cytidine acetate ligase (393 aa).

The ATP site is built by glycine 81, asparagine 142, and arginine 167.

The protein belongs to the TmcAL family.

The protein localises to the cytoplasm. It carries out the reaction cytidine(34) in elongator tRNA(Met) + acetate + ATP = N(4)-acetylcytidine(34) in elongator tRNA(Met) + AMP + diphosphate. Its function is as follows. Catalyzes the formation of N(4)-acetylcytidine (ac(4)C) at the wobble position of elongator tRNA(Met), using acetate and ATP as substrates. First activates an acetate ion to form acetyladenylate (Ac-AMP) and then transfers the acetyl group to tRNA to form ac(4)C34. This chain is tRNA(Met) cytidine acetate ligase, found in Bacillus mycoides (strain KBAB4) (Bacillus weihenstephanensis).